The sequence spans 291 residues: 4-hydroxy-tetrahydrodipicolinate synthase (291 aa).

Position 45 (Thr45) interacts with pyruvate. Tyr133 acts as the Proton donor/acceptor in catalysis. Lys161 acts as the Schiff-base intermediate with substrate in catalysis. Residue Ile203 coordinates pyruvate.

This sequence belongs to the DapA family. In terms of assembly, homotetramer; dimer of dimers.

Its subcellular location is the cytoplasm. The catalysed reaction is L-aspartate 4-semialdehyde + pyruvate = (2S,4S)-4-hydroxy-2,3,4,5-tetrahydrodipicolinate + H2O + H(+). It functions in the pathway amino-acid biosynthesis; L-lysine biosynthesis via DAP pathway; (S)-tetrahydrodipicolinate from L-aspartate: step 3/4. Its function is as follows. Catalyzes the condensation of (S)-aspartate-beta-semialdehyde [(S)-ASA] and pyruvate to 4-hydroxy-tetrahydrodipicolinate (HTPA). In Teredinibacter turnerae (strain ATCC 39867 / T7901), this protein is 4-hydroxy-tetrahydrodipicolinate synthase.